Here is a 357-residue protein sequence, read N- to C-terminus: 4-hydroxymandelate synthase (357 aa).

VOC domains lie at 5–129 and 158–309; these read EIDY…LIQR and GIDH…IFTA. A Fe cation-binding site is contributed by His161. Residues His161, Ser201, Thr214, His241, and Gln305 each contribute to the substrate site. Residue His241 coordinates Fe cation. Glu320 lines the Fe cation pocket.

The protein belongs to the 4HPPD family. In terms of assembly, monomer. The cofactor is Fe cation.

The enzyme catalyses 3-(4-hydroxyphenyl)pyruvate + O2 = (S)-4-hydroxymandelate + CO2. It functions in the pathway antibiotic biosynthesis; vancomycin biosynthesis. In terms of biological role, required to synthesize hydroxyphenylglycine, a recurring skeletal component of nonproteinogenic macrocyclic peptide antibiotics such as vancomycin. Catalyzes the conversion of p-hydroxyphenylpyruvate to p-hydroxymandelate. The decarboxylation and hydroxylation activities of HmaS show novel and distinct regioselectivity, compared to all other known p-hydroxyphenylpyruvate dioxygenases, by hydroxylating the benzylic position of the substrate instead of the phenyl ring. This chain is 4-hydroxymandelate synthase, found in Amycolatopsis orientalis (Nocardia orientalis).